A 201-amino-acid chain; its full sequence is Peptidyl-tRNA hydrolase (201 aa).

Tyrosine 14 contributes to the tRNA binding site. The active-site Proton acceptor is histidine 19. Residues tyrosine 64, asparagine 66, and asparagine 113 each contribute to the tRNA site. Positions 178–201 (PGPAMNRFNRKPEPPESGGEVAAK) are disordered.

It belongs to the PTH family. As to quaternary structure, monomer.

The protein localises to the cytoplasm. It catalyses the reaction an N-acyl-L-alpha-aminoacyl-tRNA + H2O = an N-acyl-L-amino acid + a tRNA + H(+). Functionally, hydrolyzes ribosome-free peptidyl-tRNAs (with 1 or more amino acids incorporated), which drop off the ribosome during protein synthesis, or as a result of ribosome stalling. Catalyzes the release of premature peptidyl moieties from peptidyl-tRNA molecules trapped in stalled 50S ribosomal subunits, and thus maintains levels of free tRNAs and 50S ribosomes. The sequence is that of Peptidyl-tRNA hydrolase from Koribacter versatilis (strain Ellin345).